Reading from the N-terminus, the 150-residue chain is Urease accessory protein UreE (150 aa).

This sequence belongs to the UreE family.

The protein localises to the cytoplasm. Functionally, involved in urease metallocenter assembly. Binds nickel. Probably functions as a nickel donor during metallocenter assembly. The protein is Urease accessory protein UreE of Staphylococcus saprophyticus subsp. saprophyticus (strain ATCC 15305 / DSM 20229 / NCIMB 8711 / NCTC 7292 / S-41).